The primary structure comprises 459 residues: Zinc finger protein ZPR1 (459 aa).

The segment covering 1-29 (MSAGGAVEPGLPAAAAAPSAAPARDPGPG) has biased composition (low complexity). The disordered stretch occupies residues 1 to 43 (MSAGGAVEPGLPAAAAAPSAAPARDPGPGHLFRPISAEDEEQQ). C4-type zinc fingers lie at residues 51 to 83 (CMNC…CEHC) and 259 to 291 (CPEC…CENC). The segment at 438–459 (NEELGLNDMKTEGYETGLPAQR) is disordered.

This sequence belongs to the ZPR1 family. Component of an import snRNP complex composed of KPNB1, SNUPN, SMN1 and ZNF259. Interacts (via C-terminal region) with SMN1 (via C-terminal region); the interaction occurs after treatment with serum. Interacts with elongation factor 1-alpha EEF1A1; the interaction occurs in a epidermal growth factor (EGF)-dependent manner. Interacts (via zinc fingers) with EGFR (via C-terminal cytoplasmic kinase domain); the interaction is negatively regulated in response to epidermal growth factor (EGF) stimulation and EGFR kinase activity. May also bind to the PDGFR receptor.

It localises to the nucleus. The protein localises to the cytoplasm. Its subcellular location is the nucleolus. It is found in the perinuclear region. The protein resides in the gem. It localises to the cajal body. The protein localises to the cell projection. Its subcellular location is the axon. It is found in the growth cone. Its function is as follows. Acts as a signaling molecule that communicates proliferative growth signals from the cytoplasm to the nucleus. Plays a role for the localization and accumulation of the survival motor neuron protein SMN1 in sub-nuclear bodies, including gems and Cajal bodies. Induces neuron differentiation and stimulates axonal growth and formation of growth cone in spinal cord motor neurons. Plays a role in the splicing of cellular pre-mRNAs. May be involved in H(2)O(2)-induced neuronal cell death. This chain is Zinc finger protein ZPR1 (ZNF259), found in Bos taurus (Bovine).